We begin with the raw amino-acid sequence, 244 residues long: Type III pantothenate kinase (244 aa).

Residue 11–18 (DAGNTSIK) coordinates ATP. Substrate-binding positions include tyrosine 90 and 97 to 100 (GIDR). The Proton acceptor role is filled by aspartate 99. Aspartate 119 contributes to the K(+) binding site. Residue threonine 122 coordinates ATP. Threonine 175 provides a ligand contact to substrate.

Belongs to the type III pantothenate kinase family. In terms of assembly, homodimer. NH4(+) is required as a cofactor. It depends on K(+) as a cofactor.

Its subcellular location is the cytoplasm. It carries out the reaction (R)-pantothenate + ATP = (R)-4'-phosphopantothenate + ADP + H(+). The protein operates within cofactor biosynthesis; coenzyme A biosynthesis; CoA from (R)-pantothenate: step 1/5. In terms of biological role, catalyzes the phosphorylation of pantothenate (Pan), the first step in CoA biosynthesis. This is Type III pantothenate kinase from Marinomonas sp. (strain MWYL1).